Reading from the N-terminus, the 239-residue chain is Purine nucleoside phosphorylase DeoD-type (239 aa).

A purine D-ribonucleoside is bound at residue histidine 5. Residues glycine 21 and arginine 25 each coordinate phosphate. Lysine 27 is modified (N6-acetyllysine). Residues arginine 44 and 88–91 (RVGS) contribute to the phosphate site. A purine D-ribonucleoside-binding positions include 180–182 (EME) and 204–205 (SD). The Proton donor role is filled by aspartate 205.

This sequence belongs to the PNP/UDP phosphorylase family. Homohexamer; trimer of homodimers.

It catalyses the reaction a purine D-ribonucleoside + phosphate = a purine nucleobase + alpha-D-ribose 1-phosphate. The catalysed reaction is a purine 2'-deoxy-D-ribonucleoside + phosphate = a purine nucleobase + 2-deoxy-alpha-D-ribose 1-phosphate. Its function is as follows. Catalyzes the reversible phosphorolytic breakdown of the N-glycosidic bond in the beta-(deoxy)ribonucleoside molecules, with the formation of the corresponding free purine bases and pentose-1-phosphate. The sequence is that of Purine nucleoside phosphorylase DeoD-type from Shigella dysenteriae serotype 1 (strain Sd197).